We begin with the raw amino-acid sequence, 867 residues long: uncharacterized protein (867 aa).

Residues 1–294 (MKFSHSLQFN…GSSLRESYMK (294 aa)) form the SPX domain. Disordered regions lie at residues 105-152 (QGNN…GQTS) and 165-228 (ESTA…NNNR). Positions 138-152 (ITSSNREIYLNGQTS) are enriched in polar residues. Residues 198–223 (GNDDEVEEEDDDDDDEDEDEDEDEDN) show a composition bias toward acidic residues. 12 consecutive transmembrane segments (helical) span residues 406-426 (TIAT…FPVI), 434-454 (CLAL…PLFV), 485-505 (VIFS…FTIA), 537-557 (MFVA…VLCF), 576-596 (ILIV…PISS), 616-636 (FAVS…LLSF), 656-676 (FTGV…LWCL), 683-703 (VFGD…GTGL), 712-732 (FLWT…VVSS), 755-775 (VLLI…HIVA), 797-817 (LFVL…TSGF), and 842-862 (AGIP…TPIM).

The protein belongs to the CitM (TC 2.A.11) transporter family.

It localises to the endoplasmic reticulum membrane. This is an uncharacterized protein from Schizosaccharomyces pombe (strain 972 / ATCC 24843) (Fission yeast).